Reading from the N-terminus, the 517-residue chain is Transmembrane protein 180 (517 aa).

The Extracellular segment spans residues 1–11 (MRLGGPWAWLL). The chain crosses the membrane as a helical span at residues 12 to 43 (GLPTAVVYGSLALFVSVLHNVFLLYYVDTFVS). At 44–55 (VYKIDKAAFWVG) the chain is on the cytoplasmic side. Residues 56-74 (ETVFLLWNSLNDPLFGWLS) form a helical membrane-spanning segment. At 75-100 (DRQFLSSQPRSGAGLSSRAVVLARVR) the chain is on the extracellular side. A helical transmembrane segment spans residues 101 to 118 (ALGWHGPLLALSFLAFWV). Residues 119–126 (PWAPAGLQ) are Cytoplasmic-facing. The helical transmembrane segment at 127–151 (FLLCLCLYDGFLTLVDLHHHALLAD) threads the bilayer. Residues 152-155 (LALS) are Extracellular-facing. A helical membrane pass occupies residues 156–179 (AHDRTHLNFYCSLFSAAGSLSVFA). Residues 180–191 (SYAFWNKEDFSS) are Cytoplasmic-facing. Residues 192–223 (FRAFCLALATGSGLGFVGAARLLRRRVEAAGR) traverse the membrane as a helical segment. Residues 224–264 (EPGCPAMAVNDGLCEEELLVGGEEAGSITLGQYLQQLARHR) are Extracellular-facing. Residues 265 to 292 (NFLWFVGMDLVQVFHCHFNSNFFPLFLE) form a helical membrane-spanning segment. Topologically, residues 293–305 (HLLSDHISLSTGS) are cytoplasmic. The helical transmembrane segment at 306–325 (FLLGISYVAPHLNNLYFLPL) threads the bilayer. Residues 326-330 (CRRWG) are Extracellular-facing. Residues 331–350 (VYAVVRGLFLLKLGLSLLML) traverse the membrane as a helical segment. Over 351 to 358 (LAGPDHPG) the chain is Cytoplasmic. The chain crosses the membrane as a helical span at residues 359 to 393 (LLCLFIASNRVFTEGTCKLLTLVVTDLVDEDLVLN). Over 394 to 402 (HRKQAASAL) the chain is Extracellular. The helical transmembrane segment at 403–429 (LFGMVALVTKPGQTFAPLLGTWLLCFY) threads the bilayer. Residues 430 to 466 (TGHDLFQQHPPAPVGSAQPWPEPPAPPPAQAPPLRQG) lie on the Cytoplasmic side of the membrane. A helical membrane pass occupies residues 467–485 (CFYLLVLVPIACALLQLFT). The Extracellular segment spans residues 486 to 517 (WSQFTLHGRRLHMVKAQRQSLSRAQTLDVKMV).

The protein resides in the cell membrane. The protein is Transmembrane protein 180 of Bos taurus (Bovine).